We begin with the raw amino-acid sequence, 142 residues long: Transcriptional regulator MraZ (142 aa).

SpoVT-AbrB domains lie at 5–51 and 77–120; these read ASAL…PRPE and AMDV…DSQT.

This sequence belongs to the MraZ family. As to quaternary structure, forms oligomers.

The protein resides in the cytoplasm. It localises to the nucleoid. The chain is Transcriptional regulator MraZ from Burkholderia multivorans (strain ATCC 17616 / 249).